Reading from the N-terminus, the 194-residue chain is Large ribosomal subunit protein eL15 (194 aa).

The disordered stretch occupies residues 160-194; it reads RGLTSAGKKGRGLMYKGKGTEKVRPSVRANSKKAK.

Belongs to the eukaryotic ribosomal protein eL15 family.

This is Large ribosomal subunit protein eL15 from Methanococcus maripaludis (strain C7 / ATCC BAA-1331).